The sequence spans 651 residues: Protein transport protein SEC9 (651 aa).

Disordered regions lie at residues 1-22, 53-299, and 313-332; these read MGLK…QNKD, AEDK…QAPM, and RNSE…DFEE. Phosphoserine occurs at positions 79 and 92. Over residues 86-112 the composition is skewed to polar residues; that stretch reads NEATAGSNRGSSGTQDLGNGAESNSMQ. Basic and acidic residues predominate over residues 120 to 129; sequence DDYRYDDDPY. Polar residues-rich tracts occupy residues 157–218 and 244–284; these read GTSL…SLDQ and DSNT…ANPY. Ser186, Ser190, Ser213, Ser271, and Ser273 each carry phosphoserine. A compositionally biased stretch (low complexity) spans 285 to 296; sequence SSRSVRQPQSQQ. Basic and acidic residues predominate over residues 313–327; that stretch reads RNSEVDLNEEPRTGE. Ser315 is subject to Phosphoserine. Thr355 is modified (phosphothreonine). Residue Ser359 is modified to Phosphoserine. T-SNARE coiled-coil homology domains lie at 434–496 and 588–650; these read KFTK…VAEL and DEME…LAGI.

This sequence belongs to the SNAP-25 family. In terms of assembly, interacts with SRO7 and SRO77.

Its function is as follows. Component of a SNARE complex that may be the effector of SEC4 function in exocytosis. This Saccharomyces cerevisiae (strain ATCC 204508 / S288c) (Baker's yeast) protein is Protein transport protein SEC9 (SEC9).